The following is a 104-amino-acid chain: MSSVPASAYLTLAIILFCIGLFGALTKRNTVIVLVCIELMLNAANLNLVAFSKLGLFPNLTGQIFSLFTMSVAAAEAAVGLAILIALYRNRPTVHVDEMDTLKG.

Transmembrane regions (helical) follow at residues 4-24 (VPAS…LFGA), 31-51 (VIVL…LVAF), and 67-87 (LFTM…LIAL).

It belongs to the complex I subunit 4L family. In terms of assembly, NDH-1 is composed of 14 different subunits. Subunits NuoA, H, J, K, L, M, N constitute the membrane sector of the complex.

The protein resides in the cell membrane. The enzyme catalyses a quinone + NADH + 5 H(+)(in) = a quinol + NAD(+) + 4 H(+)(out). Functionally, NDH-1 shuttles electrons from NADH, via FMN and iron-sulfur (Fe-S) centers, to quinones in the respiratory chain. The immediate electron acceptor for the enzyme in this species is believed to be a menaquinone. Couples the redox reaction to proton translocation (for every two electrons transferred, four hydrogen ions are translocated across the cytoplasmic membrane), and thus conserves the redox energy in a proton gradient. The chain is NADH-quinone oxidoreductase subunit K from Bacillus mycoides (strain KBAB4) (Bacillus weihenstephanensis).